Reading from the N-terminus, the 210-residue chain is 3-demethoxyubiquinol 3-hydroxylase (210 aa).

Fe cation is bound by residues Glu-59, Glu-89, His-92, Glu-141, Glu-173, and His-176.

This sequence belongs to the COQ7 family. Fe cation serves as cofactor.

It is found in the cell membrane. It catalyses the reaction a 5-methoxy-2-methyl-3-(all-trans-polyprenyl)benzene-1,4-diol + AH2 + O2 = a 3-demethylubiquinol + A + H2O. Its pathway is cofactor biosynthesis; ubiquinone biosynthesis. Functionally, catalyzes the hydroxylation of 2-nonaprenyl-3-methyl-6-methoxy-1,4-benzoquinol during ubiquinone biosynthesis. This chain is 3-demethoxyubiquinol 3-hydroxylase, found in Albidiferax ferrireducens (strain ATCC BAA-621 / DSM 15236 / T118) (Rhodoferax ferrireducens).